The sequence spans 367 residues: Methylthioribose-1-phosphate isomerase (367 aa).

Substrate contacts are provided by residues 48–50 (RGA), arginine 91, and glutamine 215. The Proton donor role is filled by aspartate 256. Substrate is bound at residue 266–267 (NK).

This sequence belongs to the eIF-2B alpha/beta/delta subunits family. MtnA subfamily.

It carries out the reaction 5-(methylsulfanyl)-alpha-D-ribose 1-phosphate = 5-(methylsulfanyl)-D-ribulose 1-phosphate. The protein operates within amino-acid biosynthesis; L-methionine biosynthesis via salvage pathway; L-methionine from S-methyl-5-thio-alpha-D-ribose 1-phosphate: step 1/6. Catalyzes the interconversion of methylthioribose-1-phosphate (MTR-1-P) into methylthioribulose-1-phosphate (MTRu-1-P). This chain is Methylthioribose-1-phosphate isomerase, found in Syntrophus aciditrophicus (strain SB).